The chain runs to 304 residues: Type II methyltransferase M.ScaI (304 aa).

The protein belongs to the N(4)/N(6)-methyltransferase family. N(4) subfamily.

It carries out the reaction a 2'-deoxycytidine in DNA + S-adenosyl-L-methionine = an N(4)-methyl-2'-deoxycytidine in DNA + S-adenosyl-L-homocysteine + H(+). Its function is as follows. A methylase that recognizes the double-stranded sequence 5'-AGTACT-3', methylates C-5 on both strands, and protects the DNA from cleavage by the ScaI endonuclease. The sequence is that of Type II methyltransferase M.ScaI from Streptomyces caespitosus.